The following is a 947-amino-acid chain: DNA polymerase (947 aa).

The protein belongs to the DNA polymerase type-B family.

The catalysed reaction is DNA(n) + a 2'-deoxyribonucleoside 5'-triphosphate = DNA(n+1) + diphosphate. This Red sea bream iridovirus (RSIV) protein is DNA polymerase.